Reading from the N-terminus, the 695-residue chain is Elongation factor G 1 (695 aa).

The tr-type G domain occupies T6–K281. GTP-binding positions include A15–T22, D79–H83, and N133–D136.

The protein belongs to the TRAFAC class translation factor GTPase superfamily. Classic translation factor GTPase family. EF-G/EF-2 subfamily.

The protein localises to the cytoplasm. Catalyzes the GTP-dependent ribosomal translocation step during translation elongation. During this step, the ribosome changes from the pre-translocational (PRE) to the post-translocational (POST) state as the newly formed A-site-bound peptidyl-tRNA and P-site-bound deacylated tRNA move to the P and E sites, respectively. Catalyzes the coordinated movement of the two tRNA molecules, the mRNA and conformational changes in the ribosome. This chain is Elongation factor G 1 (fusA), found in Synechocystis sp. (strain ATCC 27184 / PCC 6803 / Kazusa).